Here is a 292-residue protein sequence, read N- to C-terminus: ATP synthase gamma chain (292 aa).

This sequence belongs to the ATPase gamma chain family. As to quaternary structure, F-type ATPases have 2 components, CF(1) - the catalytic core - and CF(0) - the membrane proton channel. CF(1) has five subunits: alpha(3), beta(3), gamma(1), delta(1), epsilon(1). CF(0) has three main subunits: a, b and c.

The protein localises to the cell inner membrane. Produces ATP from ADP in the presence of a proton gradient across the membrane. The gamma chain is believed to be important in regulating ATPase activity and the flow of protons through the CF(0) complex. The protein is ATP synthase gamma chain of Hyphomonas neptunium (strain ATCC 15444).